We begin with the raw amino-acid sequence, 256 residues long: Trans-aconitate 2-methyltransferase (256 aa).

The protein belongs to the methyltransferase superfamily. Tam family.

It is found in the cytoplasm. The catalysed reaction is trans-aconitate + S-adenosyl-L-methionine = (E)-3-(methoxycarbonyl)pent-2-enedioate + S-adenosyl-L-homocysteine. Catalyzes the S-adenosylmethionine monomethyl esterification of trans-aconitate. The protein is Trans-aconitate 2-methyltransferase of Rhizobium rhizogenes (strain K84 / ATCC BAA-868) (Agrobacterium radiobacter).